Reading from the N-terminus, the 75-residue chain is Putative defensin-like protein 119 (75 aa).

A signal peptide spans 1 to 25 (MAKSTIFAIFMIVFVLGMVTKETKG). 4 cysteine pairs are disulfide-bonded: Cys29–Cys73, Cys39–Cys58, Cys44–Cys67, and Cys48–Cys69.

Belongs to the DEFL family.

The protein resides in the secreted. This is Putative defensin-like protein 119 (LCR53) from Arabidopsis thaliana (Mouse-ear cress).